The chain runs to 190 residues: UPF0200 protein OE_4442F (190 aa).

Residue 8-15 participates in ATP binding; sequence GMPGSGKS. Residues 120–144 form a disordered region; the sequence is ARIEDRDRPGDTDGEPLDAREDRER.

The protein belongs to the UPF0200 family.

The protein is UPF0200 protein OE_4442F of Halobacterium salinarum (strain ATCC 29341 / DSM 671 / R1).